The following is a 278-amino-acid chain: uncharacterized protein (278 aa).

This is an uncharacterized protein from Escherichia coli (strain K12).